The sequence spans 577 residues: ABC transporter G family member 4 (577 aa).

Residues 6 to 248 (LSTSSISYAK…LLSKGFTVPS (243 aa)) form the ABC transporter domain. 48 to 55 (GPSGAGKS) lines the ATP pocket. The region spanning 299–509 (TEISLLSSRF…ALDALLINEY (211 aa)) is the ABC transmembrane type-2 domain. 7 helical membrane-spanning segments follow: residues 318–338 (LLLT…TIYL), 353–373 (LFAF…PIFI), 400–420 (VFLP…YFLV), 429–449 (LAYF…FVLF), 458–478 (IAGT…SGYF), 487–507 (YWLF…LLIN), and 548–568 (FNVY…FLVL).

The protein belongs to the ABC transporter superfamily. ABCG family. Eye pigment precursor importer (TC 3.A.1.204) subfamily.

It localises to the membrane. The protein is ABC transporter G family member 4 (ABCG4) of Arabidopsis thaliana (Mouse-ear cress).